Reading from the N-terminus, the 264-residue chain is MDVYGLSSPDLLRIDDLLDFSNEDIFSASSSGGSTAATSSSSFPPPQNPSFHHHHLPSSADHHSFLHDICVPSDDAAHLEWLSQFVDDSFADFPANPLGGTMTSVKTETSFPGKPRSKRSRAPAPFAGTWSPMPLESEHQQLHSAAKFKPKKEQSGGGGGGGGRHQSSSSETTEGGGMRRCTHCASEKTPQWRTGPLGPKTLCNACGVRFKSGRLVPEYRPASSPTFVLTQHSNSHRKVMELRRQKEVMRQPQQVQLHHHHHPF.

Residues 29-42 (SSSGGSTAATSSSS) are compositionally biased toward low complexity. Disordered stretches follow at residues 29 to 57 (SSSGGSTAATSSSSFPPPQNPSFHHHHLP) and 96 to 192 (NPLG…TPQW). A compositionally biased stretch (polar residues) spans 101–110 (TMTSVKTETS). Residues 114–121 (KPRSKRSR) carry the Nuclear localization signal motif. Positions 155–164 (SGGGGGGGGR) are enriched in gly residues. The GATA-type zinc-finger motif lies at 175-229 (GGGMRRCTHCASEKTPQWRTGPLGPKTLCNACGVRFKSGRLVPEYRPASSPTFVL).

This sequence belongs to the type IV zinc-finger family. Class A subfamily. As to expression, mostly expressed in roots. Also expressed in flowers and leaves, and to a lower extent in stems.

It localises to the nucleus. Its function is as follows. Transcriptional activator that specifically binds 5'-GATA-3' or 5'-GAT-3' motifs within gene promoters. May be involved in the regulation of some light-responsive genes. The chain is GATA transcription factor 2 (GATA2) from Arabidopsis thaliana (Mouse-ear cress).